Here is a 336-residue protein sequence, read N- to C-terminus: Isopentenyl-diphosphate delta-isomerase (336 aa).

A substrate-binding site is contributed by 5 to 6 (RK). FMN-binding positions include 60-62 (AMT), serine 90, and asparagine 117. Residue glutamine 147 coordinates substrate. Mg(2+) is bound at residue glutamate 148. Residues lysine 179, serine 204, threonine 209, 253-255 (GVR), and 274-275 (SR) contribute to the FMN site.

This sequence belongs to the IPP isomerase type 2 family. As to quaternary structure, homooctamer. Dimer of tetramers. The cofactor is FMN. NADPH is required as a cofactor. Mg(2+) serves as cofactor.

The protein resides in the cytoplasm. The catalysed reaction is isopentenyl diphosphate = dimethylallyl diphosphate. In terms of biological role, involved in the biosynthesis of isoprenoids. Catalyzes the 1,3-allylic rearrangement of the homoallylic substrate isopentenyl (IPP) to its allylic isomer, dimethylallyl diphosphate (DMAPP). This chain is Isopentenyl-diphosphate delta-isomerase, found in Streptococcus pneumoniae (strain ATCC BAA-255 / R6).